A 448-amino-acid polypeptide reads, in one-letter code: Phosphoglucosamine mutase (448 aa).

Ser-102 serves as the catalytic Phosphoserine intermediate. Positions 102, 241, 243, and 245 each coordinate Mg(2+). Ser-102 bears the Phosphoserine mark.

Belongs to the phosphohexose mutase family. Mg(2+) is required as a cofactor. In terms of processing, activated by phosphorylation.

It carries out the reaction alpha-D-glucosamine 1-phosphate = D-glucosamine 6-phosphate. Its function is as follows. Catalyzes the conversion of glucosamine-6-phosphate to glucosamine-1-phosphate. This chain is Phosphoglucosamine mutase, found in Ruegeria pomeroyi (strain ATCC 700808 / DSM 15171 / DSS-3) (Silicibacter pomeroyi).